Here is a 129-residue protein sequence, read N- to C-terminus: Small ribosomal subunit protein uS11 (129 aa).

The protein belongs to the universal ribosomal protein uS11 family. In terms of assembly, part of the 30S ribosomal subunit. Interacts with proteins S7 and S18. Binds to IF-3.

Its function is as follows. Located on the platform of the 30S subunit, it bridges several disparate RNA helices of the 16S rRNA. Forms part of the Shine-Dalgarno cleft in the 70S ribosome. The chain is Small ribosomal subunit protein uS11 from Methylobacterium nodulans (strain LMG 21967 / CNCM I-2342 / ORS 2060).